The following is a 363-amino-acid chain: NAD(P)H-quinone oxidoreductase subunit 1, chloroplastic (363 aa).

The next 6 helical transmembrane spans lie at 30 to 50 (LVPI…IVWL), 98 to 118 (FSIG…VIPF), 129 to 149 (IGIF…LMSG), 248 to 268 (YSGI…LLSS), 300 to 320 (IIGT…FLFI), and 343 to 363 (FLLP…LLSL).

The protein belongs to the complex I subunit 1 family. As to quaternary structure, NDH is composed of at least 16 different subunits, 5 of which are encoded in the nucleus.

The protein resides in the plastid. It localises to the chloroplast thylakoid membrane. It catalyses the reaction a plastoquinone + NADH + (n+1) H(+)(in) = a plastoquinol + NAD(+) + n H(+)(out). It carries out the reaction a plastoquinone + NADPH + (n+1) H(+)(in) = a plastoquinol + NADP(+) + n H(+)(out). Its function is as follows. NDH shuttles electrons from NAD(P)H:plastoquinone, via FMN and iron-sulfur (Fe-S) centers, to quinones in the photosynthetic chain and possibly in a chloroplast respiratory chain. The immediate electron acceptor for the enzyme in this species is believed to be plastoquinone. Couples the redox reaction to proton translocation, and thus conserves the redox energy in a proton gradient. This is NAD(P)H-quinone oxidoreductase subunit 1, chloroplastic from Gossypium barbadense (Sea Island cotton).